We begin with the raw amino-acid sequence, 130 residues long: Albumin-1 E (130 aa).

The N-terminal stretch at 1 to 26 is a signal peptide; sequence MASVKLASLIVLFATLGMFLTKNVGA. Disulfide bonds link C29–C46, C33–C48, and C41–C58. 2 propeptides span residues 64–69 and 123–130; these read VFLKGN and LLKSVSTA.

Post-translationally, the C-terminal glycine may be removed from PA1b.

PA1b binds to basic 7S globulin (BG) and stimulates its phosphorylation activity. Involved in the signal transduction system to regulate the growth and differentiation as a hormone peptide. Toxic to various insects through binding to a high affinity binding site in the insect gut. The polypeptide is Albumin-1 E (Pisum sativum (Garden pea)).